We begin with the raw amino-acid sequence, 257 residues long: Pyridoxine 5'-phosphate synthase (257 aa).

Asn-6 is a binding site for 3-amino-2-oxopropyl phosphate. 8-9 is a binding site for 1-deoxy-D-xylulose 5-phosphate; the sequence is DH. Residue Arg-17 coordinates 3-amino-2-oxopropyl phosphate. The active-site Proton acceptor is His-41. 1-deoxy-D-xylulose 5-phosphate contacts are provided by Arg-43 and His-48. The active-site Proton acceptor is Glu-68. Position 98 (Thr-98) interacts with 1-deoxy-D-xylulose 5-phosphate. His-210 functions as the Proton donor in the catalytic mechanism. 3-amino-2-oxopropyl phosphate-binding positions include Gly-211 and 232-233; that span reads GQ.

It belongs to the PNP synthase family. As to quaternary structure, homooctamer; tetramer of dimers.

The protein resides in the cytoplasm. The catalysed reaction is 3-amino-2-oxopropyl phosphate + 1-deoxy-D-xylulose 5-phosphate = pyridoxine 5'-phosphate + phosphate + 2 H2O + H(+). It participates in cofactor biosynthesis; pyridoxine 5'-phosphate biosynthesis; pyridoxine 5'-phosphate from D-erythrose 4-phosphate: step 5/5. In terms of biological role, catalyzes the complicated ring closure reaction between the two acyclic compounds 1-deoxy-D-xylulose-5-phosphate (DXP) and 3-amino-2-oxopropyl phosphate (1-amino-acetone-3-phosphate or AAP) to form pyridoxine 5'-phosphate (PNP) and inorganic phosphate. This chain is Pyridoxine 5'-phosphate synthase, found in Campylobacter jejuni subsp. doylei (strain ATCC BAA-1458 / RM4099 / 269.97).